The primary structure comprises 1997 residues: Autophagy-related protein 2 homolog A (1997 aa).

A Chorein N-terminal domain is found at 17-119 (CRYLLQHYLG…RGAAQGTESQ (103 aa)). Disordered stretches follow at residues 241-281 (TSVQ…IQQI), 1292-1323 (HCPPKPEPPTEIAGQKLQPPEGPSSLPPCLPA), 1371-1414 (EEIK…TDTD), 1492-1534 (SSRP…TQGG), and 1684-1718 (RLDGPAKSSSDCELEQETSQGSTEDETMSPSSSTD). Residues 1311–1321 (PEGPSSLPPCL) show a composition bias toward pro residues. 3 stretches are compositionally biased toward polar residues: residues 1393–1408 (RVSQESLGLSDTSGDS), 1493–1532 (SRPNSARAQSPRSRTSFHNARGSPSRSSVTNRPQNTWRTQ), and 1690–1718 (KSSSDCELEQETSQGSTEDETMSPSSSTD).

It belongs to the ATG2 family.

The protein localises to the preautophagosomal structure membrane. It is found in the lipid droplet. The protein resides in the endoplasmic reticulum membrane. The catalysed reaction is a 1,2-diacyl-sn-glycero-3-phospho-L-serine(in) = a 1,2-diacyl-sn-glycero-3-phospho-L-serine(out). It carries out the reaction a 1,2-diacyl-sn-glycero-3-phosphoethanolamine(in) = a 1,2-diacyl-sn-glycero-3-phosphoethanolamine(out). In terms of biological role, lipid transfer protein involved in autophagosome assembly. Tethers the edge of the isolation membrane (IM) to the endoplasmic reticulum (ER) and mediates direct lipid transfer from ER to IM for IM expansion. Binds to the ER exit site (ERES), which is the membrane source for autophagosome formation, and extracts phospholipids from the membrane source and transfers them to atg9 (atg9a or atg9b) to the IM for membrane expansion. Also regulates lipid droplets morphology and distribution within the cell. This Xenopus tropicalis (Western clawed frog) protein is Autophagy-related protein 2 homolog A.